A 256-amino-acid chain; its full sequence is MLKIVILLSAVVCALGGTVPEGLLPQLDGRIVGGSATTISSFPWQISLQRSGSHSCGGSVYSANIIVTAAHCLQSVSASSLQVRAGSTYWSSGGVVAKVAAFRNHEGYNANTMVNDIAVIRLSSSLSFSSSIKAIALATYNPANGAAAAVSGWGTQSSGSNSIPSQLQYVNVNIVSQSKCASSAYGYGSEIRNTMICAAASGKDACQGDSGGPLVSGGVLVGVVSWGYGCAYSNYPGVYADVAVLRSWVISTANSI.

Positions 1 to 22 (MLKIVILLSAVVCALGGTVPEG) are cleaved as a signal peptide. A propeptide spans 23–30 (LLPQLDGR) (activation peptide). One can recognise a Peptidase S1 domain in the interval 31-254 (IVGGSATTIS…LRSWVISTAN (224 aa)). A disulfide bridge links cysteine 56 with cysteine 72. Catalysis depends on charge relay system residues histidine 71 and aspartate 116. Cystine bridges form between cysteine 180-cysteine 197 and cysteine 206-cysteine 230. The Charge relay system role is filled by serine 210.

Belongs to the peptidase S1 family.

It is found in the secreted. The protein resides in the extracellular space. The enzyme catalyses Preferential cleavage: Arg-|-Xaa, Lys-|-Xaa.. The chain is Trypsin alpha (alphaTry) from Drosophila erecta (Fruit fly).